The chain runs to 488 residues: 3-octaprenyl-4-hydroxybenzoate carboxy-lyase (488 aa).

Asn172 provides a ligand contact to Mn(2+). Prenylated FMN contacts are provided by residues 175–177, 189–191, and 194–195; these read IYR, RWL, and RG. Glu238 is a Mn(2+) binding site. Asp287 serves as the catalytic Proton donor.

Belongs to the UbiD family. In terms of assembly, homohexamer. The cofactor is prenylated FMN. Requires Mn(2+) as cofactor.

It is found in the cell membrane. The catalysed reaction is a 4-hydroxy-3-(all-trans-polyprenyl)benzoate + H(+) = a 2-(all-trans-polyprenyl)phenol + CO2. The protein operates within cofactor biosynthesis; ubiquinone biosynthesis. Catalyzes the decarboxylation of 3-octaprenyl-4-hydroxy benzoate to 2-octaprenylphenol, an intermediate step in ubiquinone biosynthesis. In Pseudomonas putida (strain ATCC 47054 / DSM 6125 / CFBP 8728 / NCIMB 11950 / KT2440), this protein is 3-octaprenyl-4-hydroxybenzoate carboxy-lyase.